Reading from the N-terminus, the 106-residue chain is PAT complex subunit Asterix (106 aa).

Over residues 1–10 (MSANSMSDPR) the composition is skewed to polar residues. The disordered stretch occupies residues 1 to 29 (MSANSMSDPRSPNKVLRYKPPPSECNPAL). N-acetylserine is present on Ser2. Over 2 to 32 (SANSMSDPRSPNKVLRYKPPPSECNPALDDP) the chain is Cytoplasmic. The helical transmembrane segment at 33–51 (TPDYMNLLGMIFSMCGLML) threads the bilayer. Lys52 is a topological domain (lumenal). A helical membrane pass occupies residues 53–70 (LKWCAWVAVYCSFISFAN). The Cytoplasmic segment spans residues 71–74 (SRSS). The chain crosses the membrane as a helical span at residues 75 to 95 (EDTKQMMSSFMLSISAVVMSY). The Lumenal segment spans residues 96 to 106 (LQNPQPMTPPW).

This sequence belongs to the Asterix family. Component of the PAT complex, composed of WDR83OS/Asterix and CCDC47. The PAT complex is part of the multi-pass translocon (MPT) complex, composed of three subcomplexes, the GEL complex (composed of RAB5IF/OPTI and TMCO1), the BOS complex (composed of NCLN/Nicalin, NOMO1 and TMEM147) and the PAT complex (composed of WDR83OS/Asterix and CCDC47). The MPT complex associates with the SEC61 complex.

It localises to the endoplasmic reticulum membrane. Functionally, component of the multi-pass translocon (MPT) complex that mediates insertion of multi-pass membrane proteins into the lipid bilayer of membranes. The MPT complex takes over after the SEC61 complex: following membrane insertion of the first few transmembrane segments of proteins by the SEC61 complex, the MPT complex occludes the lateral gate of the SEC61 complex to promote insertion of subsequent transmembrane regions. Within the MPT complex, the PAT subcomplex sequesters any highly polar regions in the transmembrane domains away from the non-polar membrane environment until they can be buried in the interior of the fully assembled protein. Within the PAT subcomplex, WDR83OS/Asterix binds to and redirects the substrate to a location behind the SEC61 complex. In Sus scrofa (Pig), this protein is PAT complex subunit Asterix (WDR83OS).